The following is a 145-amino-acid chain: uncharacterized protein (145 aa).

The chain crosses the membrane as a helical span at residues 16-36 (VLAYLLQLSASLVLPVAIWLI).

It localises to the mitochondrion membrane. This is an uncharacterized protein from Arabidopsis thaliana (Mouse-ear cress).